A 539-amino-acid polypeptide reads, in one-letter code: Protein pim1 (539 aa).

A disordered region spans residues 1–53; the sequence is MTSNRSTRSSTKREEVSKNGVEKRELDESDVMKNGKKPVKRAKVSSLPKPVRV. Residues 11 to 33 are compositionally biased toward basic and acidic residues; that stretch reads TKREEVSKNGVEKRELDESDVMK. A compositionally biased stretch (basic residues) spans 34-43; sequence NGKKPVKRAK. 7 RCC1 repeats span residues 70–125, 127–191, 192–243, 244–296, 298–353, 354–417, and 419–472; these read RLNV…ALSH, GRVY…AITD, NGCC…ALTT, TGKV…AIDN, GRVY…ALLE, DGRV…AVTS, and GKVY…IAGI. The segment at 478–539 is disordered; it reads EPVANGIKSE…SVLEPSSTTA (62 aa). Residues 486 to 504 show a composition bias toward basic and acidic residues; that stretch reads SEPENEKKLKTEETSKTDD. The segment covering 514 to 525 has biased composition (polar residues); the sequence is VTSNGEPSTATS.

As to quaternary structure, oligomer of dis3, pim1 and spi1. Interacts with ned1.

It localises to the nucleus. Its function is as follows. Promotes the exchange of Ran(spi1)-bound GDP by GTP. Involved in the control of mitosis. Regulates a variety of nuclear events, including mitotic check-point, chromosome decondensation and mRNA processing/transport. The polypeptide is Protein pim1 (pim1) (Schizosaccharomyces pombe (strain 972 / ATCC 24843) (Fission yeast)).